A 115-amino-acid chain; its full sequence is Large ribosomal subunit protein bL20c (115 aa).

The protein belongs to the bacterial ribosomal protein bL20 family.

The protein localises to the plastid. It is found in the chloroplast. In terms of biological role, binds directly to 23S ribosomal RNA and is necessary for the in vitro assembly process of the 50S ribosomal subunit. It is not involved in the protein synthesizing functions of that subunit. The sequence is that of Large ribosomal subunit protein bL20c from Chlorokybus atmophyticus (Soil alga).